The sequence spans 231 residues: 7-cyano-7-deazaguanine synthase (231 aa).

8–18 provides a ligand contact to ATP; that stretch reads FSGGQDSTTCL. Cysteine 188, cysteine 197, cysteine 200, and cysteine 203 together coordinate Zn(2+).

It belongs to the QueC family. Zn(2+) is required as a cofactor.

The catalysed reaction is 7-carboxy-7-deazaguanine + NH4(+) + ATP = 7-cyano-7-deazaguanine + ADP + phosphate + H2O + H(+). The protein operates within purine metabolism; 7-cyano-7-deazaguanine biosynthesis. Catalyzes the ATP-dependent conversion of 7-carboxy-7-deazaguanine (CDG) to 7-cyano-7-deazaguanine (preQ(0)). The chain is 7-cyano-7-deazaguanine synthase from Erwinia tasmaniensis (strain DSM 17950 / CFBP 7177 / CIP 109463 / NCPPB 4357 / Et1/99).